We begin with the raw amino-acid sequence, 356 residues long: Dihydroorotate dehydrogenase (quinone) (356 aa).

Residues 68–72 and threonine 92 contribute to the FMN site; that span reads AGFDK. Substrate is bound at residue lysine 72. Substrate is bound at residue 117–121; it reads NRMGF. Residues asparagine 145 and asparagine 178 each coordinate FMN. Asparagine 178 contacts substrate. The active-site Nucleophile is the serine 181. Residue asparagine 183 participates in substrate binding. 2 residues coordinate FMN: lysine 214 and threonine 242. 243–244 provides a ligand contact to substrate; it reads NT. Residues glycine 266, glycine 295, and 316 to 317 each bind FMN; that span reads YT.

The protein belongs to the dihydroorotate dehydrogenase family. Type 2 subfamily. In terms of assembly, monomer. FMN serves as cofactor.

The protein localises to the cell membrane. The enzyme catalyses (S)-dihydroorotate + a quinone = orotate + a quinol. It functions in the pathway pyrimidine metabolism; UMP biosynthesis via de novo pathway; orotate from (S)-dihydroorotate (quinone route): step 1/1. In terms of biological role, catalyzes the conversion of dihydroorotate to orotate with quinone as electron acceptor. The sequence is that of Dihydroorotate dehydrogenase (quinone) from Mycobacterium sp. (strain KMS).